Reading from the N-terminus, the 238-residue chain is Phosphoribosylaminoimidazole-succinocarboxamide synthase (238 aa).

This sequence belongs to the SAICAR synthetase family.

It carries out the reaction 5-amino-1-(5-phospho-D-ribosyl)imidazole-4-carboxylate + L-aspartate + ATP = (2S)-2-[5-amino-1-(5-phospho-beta-D-ribosyl)imidazole-4-carboxamido]succinate + ADP + phosphate + 2 H(+). It participates in purine metabolism; IMP biosynthesis via de novo pathway; 5-amino-1-(5-phospho-D-ribosyl)imidazole-4-carboxamide from 5-amino-1-(5-phospho-D-ribosyl)imidazole-4-carboxylate: step 1/2. The chain is Phosphoribosylaminoimidazole-succinocarboxamide synthase from Marinomonas sp. (strain MWYL1).